The following is a 363-amino-acid chain: Histidine biosynthesis bifunctional protein HisB (363 aa).

The segment at Met-1–Pro-174 is histidinol-phosphatase. The active-site Nucleophile is Asp-9. Residues Asp-9 and Asp-11 each coordinate Mg(2+). Asp-11 acts as the Proton donor in catalysis. Residues Cys-92, His-94, Cys-100, and Cys-102 each contribute to the Zn(2+) site. Asp-129 lines the Mg(2+) pocket. An imidazoleglycerol-phosphate dehydratase region spans residues Arg-175–Leu-363.

The protein in the N-terminal section; belongs to the histidinol-phosphatase family. It in the C-terminal section; belongs to the imidazoleglycerol-phosphate dehydratase family. The cofactor is Mg(2+). It depends on Zn(2+) as a cofactor.

The protein resides in the cytoplasm. It carries out the reaction D-erythro-1-(imidazol-4-yl)glycerol 3-phosphate = 3-(imidazol-4-yl)-2-oxopropyl phosphate + H2O. It catalyses the reaction L-histidinol phosphate + H2O = L-histidinol + phosphate. It participates in amino-acid biosynthesis; L-histidine biosynthesis; L-histidine from 5-phospho-alpha-D-ribose 1-diphosphate: step 6/9. The protein operates within amino-acid biosynthesis; L-histidine biosynthesis; L-histidine from 5-phospho-alpha-D-ribose 1-diphosphate: step 8/9. The chain is Histidine biosynthesis bifunctional protein HisB from Actinobacillus pleuropneumoniae serotype 5b (strain L20).